Here is a 207-residue protein sequence, read N- to C-terminus: Guanylate kinase (207 aa).

Residues 5–184 enclose the Guanylate kinase-like domain; sequence GNLFIVSAPS…ALADLRAIIR (180 aa). ATP is bound at residue 12–19; it reads APSGAGKS.

This sequence belongs to the guanylate kinase family.

The protein localises to the cytoplasm. It carries out the reaction GMP + ATP = GDP + ADP. Functionally, essential for recycling GMP and indirectly, cGMP. This Shewanella oneidensis (strain ATCC 700550 / JCM 31522 / CIP 106686 / LMG 19005 / NCIMB 14063 / MR-1) protein is Guanylate kinase.